A 305-amino-acid chain; its full sequence is UDP-3-O-acyl-N-acetylglucosamine deacetylase (305 aa).

Zn(2+) is bound by residues H78, H237, and D241. The active-site Proton donor is the H264.

It belongs to the LpxC family. It depends on Zn(2+) as a cofactor.

The catalysed reaction is a UDP-3-O-[(3R)-3-hydroxyacyl]-N-acetyl-alpha-D-glucosamine + H2O = a UDP-3-O-[(3R)-3-hydroxyacyl]-alpha-D-glucosamine + acetate. It participates in glycolipid biosynthesis; lipid IV(A) biosynthesis; lipid IV(A) from (3R)-3-hydroxytetradecanoyl-[acyl-carrier-protein] and UDP-N-acetyl-alpha-D-glucosamine: step 2/6. Functionally, catalyzes the hydrolysis of UDP-3-O-myristoyl-N-acetylglucosamine to form UDP-3-O-myristoylglucosamine and acetate, the committed step in lipid A biosynthesis. This is UDP-3-O-acyl-N-acetylglucosamine deacetylase from Paraburkholderia phymatum (strain DSM 17167 / CIP 108236 / LMG 21445 / STM815) (Burkholderia phymatum).